The sequence spans 431 residues: UDP-N-acetylglucosamine 1-carboxyvinyltransferase (431 aa).

Residue 24-25 coordinates phosphoenolpyruvate; it reads KN. Arg-95 serves as a coordination point for UDP-N-acetyl-alpha-D-glucosamine. Asp-119 (proton donor) is an active-site residue. Asp-314 and Met-336 together coordinate UDP-N-acetyl-alpha-D-glucosamine.

This sequence belongs to the EPSP synthase family. MurA subfamily.

The protein localises to the cytoplasm. It carries out the reaction phosphoenolpyruvate + UDP-N-acetyl-alpha-D-glucosamine = UDP-N-acetyl-3-O-(1-carboxyvinyl)-alpha-D-glucosamine + phosphate. Its pathway is cell wall biogenesis; peptidoglycan biosynthesis. Functionally, cell wall formation. Adds enolpyruvyl to UDP-N-acetylglucosamine. This is UDP-N-acetylglucosamine 1-carboxyvinyltransferase from Bradyrhizobium diazoefficiens (strain JCM 10833 / BCRC 13528 / IAM 13628 / NBRC 14792 / USDA 110).